Here is a 360-residue protein sequence, read N- to C-terminus: Peptide chain release factor 1 (360 aa).

Gln-235 carries the N5-methylglutamine modification. Positions 285-314 (KRQQAEASTRRNLLGSGDRSDRNRTYNFPQ) are disordered.

It belongs to the prokaryotic/mitochondrial release factor family. Post-translationally, methylated by PrmC. Methylation increases the termination efficiency of RF1.

It localises to the cytoplasm. Peptide chain release factor 1 directs the termination of translation in response to the peptide chain termination codons UAG and UAA. This Klebsiella pneumoniae subsp. pneumoniae (strain ATCC 700721 / MGH 78578) protein is Peptide chain release factor 1.